Reading from the N-terminus, the 114-residue chain is UPF0060 membrane protein GDI3492/Gdia_2889 (114 aa).

4 helical membrane-spanning segments follow: residues 8-28, 35-55, 64-84, and 92-112; these read FAVY…WWCW, AWVL…LTLV, FAAY…LVEG, and AAGV…GRGA.

It belongs to the UPF0060 family.

It localises to the cell inner membrane. The sequence is that of UPF0060 membrane protein GDI3492/Gdia_2889 from Gluconacetobacter diazotrophicus (strain ATCC 49037 / DSM 5601 / CCUG 37298 / CIP 103539 / LMG 7603 / PAl5).